Consider the following 734-residue polypeptide: Predicted GPI-anchored protein 49 (734 aa).

A signal peptide spans 1-16 (MNYITSLLLLSSNTFL). 4 N-linked (GlcNAc...) asparagine glycosylation sites follow: Asn-27, Asn-56, Asn-68, and Asn-71. The interval 78–145 (DNSDTDIDDS…NESDTQNEND (68 aa)) is disordered. The segment covering 87 to 98 (SSSNSEDVSSND) has biased composition (low complexity). 4 N-linked (GlcNAc...) asparagine glycosylation sites follow: Asn-105, Asn-118, Asn-136, and Asn-180. Residues 110–129 (FSDESDEGNDSDDNGDEVEN) show a composition bias toward acidic residues. The segment covering 130–141 (MENNQANESDTQ) has biased composition (polar residues). Disordered regions lie at residues 216-262 (SPKS…LKSK) and 331-360 (DANPTEEYDSGDGKENTQQNPIPEKMRLPT). Positions 228 to 259 (SRKKTLKSKSKSKSSKLKHKSRKSHKRRPKLL) are enriched in basic residues. N-linked (GlcNAc...) asparagine glycans are attached at residues Asn-388 and Asn-427. Residues 447–479 (PPRYSNHHSEFTVERPPRPSRTKKRPRIKAKKT) form a disordered region. The segment covering 453–463 (HHSEFTVERPP) has biased composition (basic and acidic residues). Basic residues predominate over residues 464-479 (RPSRTKKRPRIKAKKT). Asn-517 carries an N-linked (GlcNAc...) asparagine glycan. Residues 582-653 (KPQETKLHSP…STTSTKPNDQ (72 aa)) form a disordered region. Residues 592 to 611 (TSTDTKSSKLMSSSSSNNNK) are compositionally biased toward low complexity. The span at 620 to 631 (EYNQTQESTSYN) shows a compositional bias: polar residues. 2 N-linked (GlcNAc...) asparagine glycosylation sites follow: Asn-622 and Asn-631. Residues 632 to 650 (TTKAVPKTSVVSSTTSTKP) are compositionally biased toward low complexity. Ser-707 is lipidated: GPI-anchor amidated serine. The propeptide at 708–734 (ASQNLSFSVLGLIILLLLLPGLLIIIM) is removed in mature form. Residue Asn-711 is glycosylated (N-linked (GlcNAc...) asparagine).

Its subcellular location is the cell membrane. The chain is Predicted GPI-anchored protein 49 (PGA49) from Candida albicans (strain SC5314 / ATCC MYA-2876) (Yeast).